The following is a 671-amino-acid chain: Putative protein kinase C delta type homolog (671 aa).

Residues 1–136 (MMFTRAQVRK…ITNRRGAIKH (136 aa)) are disordered. The span at 14–27 (SNSSSQRPRSSGGS) shows a compositional bias: low complexity. The segment covering 57–101 (ARRDQYRDRDHYGKHSFELPRQHSKEEAYHRDRESSAGGVDRGER) has biased composition (basic and acidic residues). Positions 102-116 (SGIGGNGGGVTGGGV) are enriched in gly residues. 2 Phorbol-ester/DAG-type zinc fingers span residues 144 to 194 (GHRF…LGKC) and 216 to 266 (PHRF…ANLC). Positions 343-601 (FHFLAVLGKG…AGDIADHIFF (259 aa)) constitute a Protein kinase domain. ATP is bound by residues 349–357 (LGKGSFGKV) and Lys-372. The active-site Proton acceptor is the Asp-467. The AGC-kinase C-terminal domain occupies 602–671 (RPIDWGLLEK…TYTNPHITLD (70 aa)).

Belongs to the protein kinase superfamily. AGC Ser/Thr protein kinase family. PKC subfamily.

The catalysed reaction is L-seryl-[protein] + ATP = O-phospho-L-seryl-[protein] + ADP + H(+). The enzyme catalyses L-threonyl-[protein] + ATP = O-phospho-L-threonyl-[protein] + ADP + H(+). This Drosophila melanogaster (Fruit fly) protein is Putative protein kinase C delta type homolog.